Here is a 207-residue protein sequence, read N- to C-terminus: Uracil phosphoribosyltransferase (207 aa).

Residues R77, R102, and 129-137 (DPMLATGGS) each bind 5-phospho-alpha-D-ribose 1-diphosphate. Residues I192 and 197–199 (GDA) each bind uracil. Residue D198 coordinates 5-phospho-alpha-D-ribose 1-diphosphate.

The protein belongs to the UPRTase family. It depends on Mg(2+) as a cofactor.

It catalyses the reaction UMP + diphosphate = 5-phospho-alpha-D-ribose 1-diphosphate + uracil. It participates in pyrimidine metabolism; UMP biosynthesis via salvage pathway; UMP from uracil: step 1/1. With respect to regulation, allosterically activated by GTP. Functionally, catalyzes the conversion of uracil and 5-phospho-alpha-D-ribose 1-diphosphate (PRPP) to UMP and diphosphate. This is Uracil phosphoribosyltransferase from Ureaplasma parvum serovar 3 (strain ATCC 27815 / 27 / NCTC 11736).